The sequence spans 518 residues: Protein nucleotidyltransferase YdiU (518 aa).

Over residues 1 to 10 (MTHLHFDNRL) the composition is skewed to basic and acidic residues. A disordered region spans residues 1-25 (MTHLHFDNRLRQQLPGDPEEGARRR). Gly-100, Gly-102, Arg-103, Lys-123, Asp-135, Gly-136, Arg-193, and Arg-200 together coordinate ATP. Asp-270 serves as the catalytic Proton acceptor. Mg(2+) contacts are provided by Asn-271 and Asp-280. Asp-280 is an ATP binding site.

This sequence belongs to the SELO family. The cofactor is Mg(2+). Mn(2+) is required as a cofactor.

It carries out the reaction L-seryl-[protein] + ATP = 3-O-(5'-adenylyl)-L-seryl-[protein] + diphosphate. It catalyses the reaction L-threonyl-[protein] + ATP = 3-O-(5'-adenylyl)-L-threonyl-[protein] + diphosphate. The catalysed reaction is L-tyrosyl-[protein] + ATP = O-(5'-adenylyl)-L-tyrosyl-[protein] + diphosphate. The enzyme catalyses L-histidyl-[protein] + UTP = N(tele)-(5'-uridylyl)-L-histidyl-[protein] + diphosphate. It carries out the reaction L-seryl-[protein] + UTP = O-(5'-uridylyl)-L-seryl-[protein] + diphosphate. It catalyses the reaction L-tyrosyl-[protein] + UTP = O-(5'-uridylyl)-L-tyrosyl-[protein] + diphosphate. In terms of biological role, nucleotidyltransferase involved in the post-translational modification of proteins. It can catalyze the addition of adenosine monophosphate (AMP) or uridine monophosphate (UMP) to a protein, resulting in modifications known as AMPylation and UMPylation. This is Protein nucleotidyltransferase YdiU from Xanthomonas euvesicatoria pv. vesicatoria (strain 85-10) (Xanthomonas campestris pv. vesicatoria).